The sequence spans 89 residues: Small ribosomal subunit protein uS17 (89 aa).

This sequence belongs to the universal ribosomal protein uS17 family. In terms of assembly, part of the 30S ribosomal subunit.

Its function is as follows. One of the primary rRNA binding proteins, it binds specifically to the 5'-end of 16S ribosomal RNA. This chain is Small ribosomal subunit protein uS17, found in Ralstonia nicotianae (strain ATCC BAA-1114 / GMI1000) (Ralstonia solanacearum).